A 243-amino-acid chain; its full sequence is 1-(5-phosphoribosyl)-5-[(5-phosphoribosylamino)methylideneamino] imidazole-4-carboxamide isomerase (243 aa).

Asp8 acts as the Proton acceptor in catalysis. Catalysis depends on Asp129, which acts as the Proton donor.

It belongs to the HisA/HisF family.

Its subcellular location is the cytoplasm. The catalysed reaction is 1-(5-phospho-beta-D-ribosyl)-5-[(5-phospho-beta-D-ribosylamino)methylideneamino]imidazole-4-carboxamide = 5-[(5-phospho-1-deoxy-D-ribulos-1-ylimino)methylamino]-1-(5-phospho-beta-D-ribosyl)imidazole-4-carboxamide. Its pathway is amino-acid biosynthesis; L-histidine biosynthesis; L-histidine from 5-phospho-alpha-D-ribose 1-diphosphate: step 4/9. The polypeptide is 1-(5-phosphoribosyl)-5-[(5-phosphoribosylamino)methylideneamino] imidazole-4-carboxamide isomerase (Nitratidesulfovibrio vulgaris (strain DSM 19637 / Miyazaki F) (Desulfovibrio vulgaris)).